Here is a 555-residue protein sequence, read N- to C-terminus: Formate--tetrahydrofolate ligase (555 aa).

64–71 (TKAGIGKT) is a binding site for ATP.

It belongs to the formate--tetrahydrofolate ligase family.

It catalyses the reaction (6S)-5,6,7,8-tetrahydrofolate + formate + ATP = (6R)-10-formyltetrahydrofolate + ADP + phosphate. Its pathway is one-carbon metabolism; tetrahydrofolate interconversion. The protein is Formate--tetrahydrofolate ligase of Bacteroides fragilis (strain ATCC 25285 / DSM 2151 / CCUG 4856 / JCM 11019 / LMG 10263 / NCTC 9343 / Onslow / VPI 2553 / EN-2).